The following is a 391-amino-acid chain: 3-demethoxyubiquinol 3-hydroxylase (391 aa).

The protein belongs to the UbiH/COQ6 family. As to quaternary structure, component of the Ubi complex metabolon, which regroups five ubiquinone biosynthesis proteins (UbiE, UbiF, UbiG, UbiH and UbiI) and two accessory factors (UbiK and the lipid-binding protein UbiJ). FAD is required as a cofactor.

The protein localises to the cytoplasm. It catalyses the reaction a 5-methoxy-2-methyl-3-(all-trans-polyprenyl)benzene-1,4-diol + AH2 + O2 = a 3-demethylubiquinol + A + H2O. Its pathway is cofactor biosynthesis; ubiquinone biosynthesis. In terms of biological role, catalyzes the hydroxylation of 2-octaprenyl-3-methyl-6-methoxy-1,4-benzoquinol during ubiquinone biosynthesis. This is 3-demethoxyubiquinol 3-hydroxylase (ubiF) from Escherichia coli (strain K12).